Here is a 178-residue protein sequence, read N- to C-terminus: Relaxin-like protein SQ10 (178 aa).

A signal peptide spans 1 to 20 (MPALLFYLLGFCLLQGQVTG). 3 disulfide bridges follow: cysteine 34–cysteine 165, cysteine 46–cysteine 178, and cysteine 164–cysteine 169. Residues 54–150 (ESPSPENPFL…SSASESNTFS (97 aa)) constitute a propeptide, connecting peptide.

It belongs to the insulin family. In terms of assembly, heterodimer of a B chain and an A chain linked by two disulfide bonds.

The protein resides in the secreted. This is Relaxin-like protein SQ10 from Oryctolagus cuniculus (Rabbit).